The chain runs to 374 residues: UPF0754 membrane protein NWMN_1738 (374 aa).

Helical transmembrane passes span L4–I24 and S354–V374.

It belongs to the UPF0754 family.

Its subcellular location is the cell membrane. The sequence is that of UPF0754 membrane protein NWMN_1738 from Staphylococcus aureus (strain Newman).